The chain runs to 180 residues: Symerythrin (180 aa).

Positions 17-127 form a cross-link, 3-(L-phenylalan-2'-yl)-L-valine (Phe-Val); sequence FQDAVSHNNT…RRALETALEV (111 aa). Positions 21 to 180 constitute a Ferritin-like diiron domain; that stretch reads VSHNNTDANA…RALENLLEVA (160 aa). 7 residues coordinate Fe(3+): Glu-37, Glu-40, Glu-71, Glu-128, Glu-131, Glu-162, and His-165.

Monomer. It depends on Fe(3+) as a cofactor.

The protein resides in the plastid. It localises to the cyanelle. Exhibits oxidase-like and peroxidase-like activities in vitro. This is Symerythrin from Cyanophora paradoxa.